We begin with the raw amino-acid sequence, 310 residues long: Aspartate carbamoyltransferase catalytic subunit (310 aa).

Residues Arg-58 and Thr-59 each contribute to the carbamoyl phosphate site. Residue Lys-86 coordinates L-aspartate. 3 residues coordinate carbamoyl phosphate: Arg-108, His-137, and Gln-140. Residues Arg-170 and Arg-225 each contribute to the L-aspartate site. Positions 264 and 265 each coordinate carbamoyl phosphate.

This sequence belongs to the aspartate/ornithine carbamoyltransferase superfamily. ATCase family. As to quaternary structure, heterododecamer (2C3:3R2) of six catalytic PyrB chains organized as two trimers (C3), and six regulatory PyrI chains organized as three dimers (R2).

The enzyme catalyses carbamoyl phosphate + L-aspartate = N-carbamoyl-L-aspartate + phosphate + H(+). It participates in pyrimidine metabolism; UMP biosynthesis via de novo pathway; (S)-dihydroorotate from bicarbonate: step 2/3. Its function is as follows. Catalyzes the condensation of carbamoyl phosphate and aspartate to form carbamoyl aspartate and inorganic phosphate, the committed step in the de novo pyrimidine nucleotide biosynthesis pathway. The chain is Aspartate carbamoyltransferase catalytic subunit from Coxiella burnetii (strain CbuK_Q154) (Coxiella burnetii (strain Q154)).